The primary structure comprises 133 residues: Lanmodulin (133 aa).

Positions 1–21 (MAFRLSSAVLLAALVAAPAYA) are cleaved as a signal peptide. Positions 35, 37, 39, 41, 46, 59, 61, 63, 65, 70, 84, 86, 88, 90, 95, 108, 110, 112, 114, and 119 each coordinate Nd(3+). 4 EF-hand domains span residues 35 to 46 (DPDKDGTIDLKE), 59 to 70 (DPDKDGTLDAKE), 84 to 95 (DPDNDGTLDKKE), and 108 to 119 (NPDNDGTIDARE).

Monomer.

It is found in the periplasm. In terms of biological role, high-affinity lanthanide (Ln)-binding protein. Shows 100 million-fold selectivity for La(3+) over Ca(2+). Binds 3 equiv of Ln(3+) with picomolar affinity and a fourth with approximately micromolar affinity. May be involved in receiving and then transporting lanthanides (such as La(3+), Nd(3+) and Sm(3+)) to a specific periplasmic destination. In Methylorubrum extorquens (strain ATCC 14718 / DSM 1338 / JCM 2805 / NCIMB 9133 / AM1) (Methylobacterium extorquens), this protein is Lanmodulin.